The sequence spans 269 residues: Formamidopyrimidine-DNA glycosylase (269 aa).

Proline 2 acts as the Schiff-base intermediate with DNA in catalysis. The active-site Proton donor is the glutamate 3. Lysine 58 serves as the catalytic Proton donor; for beta-elimination activity. Histidine 91, arginine 110, and lysine 150 together coordinate DNA. The FPG-type zinc finger occupies 235-269 (SVYGCKNKKCYRCKGIIIKFVQNQRSTFYCKKCQT). Arginine 259 acts as the Proton donor; for delta-elimination activity in catalysis.

This sequence belongs to the FPG family. Monomer. Zn(2+) is required as a cofactor.

It catalyses the reaction Hydrolysis of DNA containing ring-opened 7-methylguanine residues, releasing 2,6-diamino-4-hydroxy-5-(N-methyl)formamidopyrimidine.. The enzyme catalyses 2'-deoxyribonucleotide-(2'-deoxyribose 5'-phosphate)-2'-deoxyribonucleotide-DNA = a 3'-end 2'-deoxyribonucleotide-(2,3-dehydro-2,3-deoxyribose 5'-phosphate)-DNA + a 5'-end 5'-phospho-2'-deoxyribonucleoside-DNA + H(+). In terms of biological role, involved in base excision repair of DNA damaged by oxidation or by mutagenic agents. Acts as a DNA glycosylase that recognizes and removes damaged bases. Has a preference for oxidized purines, such as 7,8-dihydro-8-oxoguanine (8-oxoG). Has AP (apurinic/apyrimidinic) lyase activity and introduces nicks in the DNA strand. Cleaves the DNA backbone by beta-delta elimination to generate a single-strand break at the site of the removed base with both 3'- and 5'-phosphates. This Vesicomyosocius okutanii subsp. Calyptogena okutanii (strain HA) protein is Formamidopyrimidine-DNA glycosylase.